Reading from the N-terminus, the 661-residue chain is Fusaric acid cluster transcription factor FUB12 (661 aa).

A DNA-binding region (zn(2)-C6 fungal-type) is located at residues 17 to 48; sequence CVPCRTRKIKCNAAVVGLPCGSCVSRECPDEC. 2 disordered regions span residues 56–132 and 151–184; these read RTVK…PPGQ and SAAQ…PQLD. Residues 73 to 98 are compositionally biased toward polar residues; it reads PDTNGSVLSPRQQQLPTNVSRQATDS. Residues 99 to 109 are compositionally biased toward basic and acidic residues; the sequence is SHSDPVEESIH. The segment covering 110-119 has biased composition (polar residues); the sequence is ASHTGSSLRN. Residues 120–129 show a composition bias toward basic and acidic residues; it reads DTPHSRDRRP.

It localises to the nucleus. Transcription factor that is involved in the formation of the two Fusaric acid derivatives, dehydrofusaric acid and fusarinolic acid, serving as a detoxification mechanism. The polypeptide is Fusaric acid cluster transcription factor FUB12 (Gibberella moniliformis (strain M3125 / FGSC 7600) (Maize ear and stalk rot fungus)).